Here is a 197-residue protein sequence, read N- to C-terminus: HTH-type transcriptional repressor BdcR (197 aa).

Positions 15 to 75 (RFAPEQAISA…RVLNEYVGTE (61 aa)) constitute an HTH tetR-type domain. Residues 38–57 (SVAEVTDYLGINPPSLYAAF) constitute a DNA-binding region (H-T-H motif).

In terms of biological role, negatively regulates expression of bdcA. The polypeptide is HTH-type transcriptional repressor BdcR (bdcR) (Escherichia coli (strain K12)).